Consider the following 166-residue polypeptide: Large ribosomal subunit protein uL10 (166 aa).

It belongs to the universal ribosomal protein uL10 family. In terms of assembly, part of the ribosomal stalk of the 50S ribosomal subunit. The N-terminus interacts with L11 and the large rRNA to form the base of the stalk. The C-terminus forms an elongated spine to which L12 dimers bind in a sequential fashion forming a multimeric L10(L12)X complex.

Functionally, forms part of the ribosomal stalk, playing a central role in the interaction of the ribosome with GTP-bound translation factors. The polypeptide is Large ribosomal subunit protein uL10 (Streptococcus uberis (strain ATCC BAA-854 / 0140J)).